Consider the following 342-residue polypeptide: Ribosomal RNA small subunit methyltransferase C (342 aa).

This sequence belongs to the methyltransferase superfamily. RsmC family. As to quaternary structure, monomer.

It localises to the cytoplasm. It carries out the reaction guanosine(1207) in 16S rRNA + S-adenosyl-L-methionine = N(2)-methylguanosine(1207) in 16S rRNA + S-adenosyl-L-homocysteine + H(+). Specifically methylates the guanine in position 1207 of 16S rRNA in the 30S particle. The sequence is that of Ribosomal RNA small subunit methyltransferase C from Salmonella gallinarum (strain 287/91 / NCTC 13346).